Here is a 417-residue protein sequence, read N- to C-terminus: Phosphoglycerate kinase (417 aa).

Residues valine 23, aspartate 24, phenylalanine 25, asparagine 26, glutamine 38, arginine 39, serine 62, histidine 63, glycine 65, arginine 66, leucine 121, arginine 122, histidine 169, and arginine 170 each coordinate (2R)-3-phosphoglycerate. Residue glycine 213 coordinates ADP. Glycine 213 serves as a coordination point for CDP. 2 residues coordinate AMP: alanine 214 and lysine 215. Alanine 214 is a binding site for ATP. Mg(2+) is bound at residue alanine 214. Aspartate 218 lines the CDP pocket. Aspartate 218 lines the Mg(2+) pocket. AMP is bound at residue lysine 219. Lysine 219 contributes to the ATP binding site. Residue glycine 237 participates in ADP binding. Glycine 237 lines the CDP pocket. AMP-binding residues include glycine 238 and glycine 312. Positions 238 and 312 each coordinate ATP. Residues glycine 337 and phenylalanine 342 each coordinate CDP. Phenylalanine 342 contacts ADP. Position 343 (glutamate 343) interacts with AMP. Positions 343, 374, and 375 each coordinate ATP. Aspartate 374 is a binding site for Mg(2+).

This sequence belongs to the phosphoglycerate kinase family. Monomer. Requires Mg(2+) as cofactor.

It localises to the cytoplasm. The protein localises to the mitochondrion. The catalysed reaction is (2R)-3-phosphoglycerate + ATP = (2R)-3-phospho-glyceroyl phosphate + ADP. It participates in carbohydrate degradation; glycolysis; pyruvate from D-glyceraldehyde 3-phosphate: step 2/5. Catalyzes one of the two ATP producing reactions in the glycolytic pathway via the reversible conversion of 1,3-diphosphoglycerate to 3-phosphoglycerate. Both L- and D- forms of purine and pyrimidine nucleotides can be used as substrates, but the activity is much lower on pyrimidines. Negatively regulates the biosynthesis of acetyl-CoA from pyruvate in the mitochondrion. This chain is Phosphoglycerate kinase (PGK1), found in Candida maltosa (Yeast).